Consider the following 177-residue polypeptide: Large ribosomal subunit protein uL6 (177 aa).

Lysine 44 bears the N6-acetyllysine mark.

Belongs to the universal ribosomal protein uL6 family. As to quaternary structure, part of the 50S ribosomal subunit.

Functionally, this protein binds to the 23S rRNA, and is important in its secondary structure. It is located near the subunit interface in the base of the L7/L12 stalk, and near the tRNA binding site of the peptidyltransferase center. In Shigella sonnei (strain Ss046), this protein is Large ribosomal subunit protein uL6.